A 229-amino-acid chain; its full sequence is 2,3-bisphosphoglycerate-dependent phosphoglycerate mutase 2 (229 aa).

Substrate is bound by residues 12-19, 25-26, Arg-65, 92-95, Lys-103, and 119-120; these read RHGESVAN, TG, ERHY, and RR. His-13 functions as the Tele-phosphohistidine intermediate in the catalytic mechanism. The active-site Proton donor/acceptor is the Glu-92.

This sequence belongs to the phosphoglycerate mutase family. BPG-dependent PGAM subfamily.

It carries out the reaction (2R)-2-phosphoglycerate = (2R)-3-phosphoglycerate. The protein operates within carbohydrate degradation; glycolysis; pyruvate from D-glyceraldehyde 3-phosphate: step 3/5. In terms of biological role, catalyzes the interconversion of 2-phosphoglycerate and 3-phosphoglycerate. This chain is 2,3-bisphosphoglycerate-dependent phosphoglycerate mutase 2, found in Lactobacillus johnsonii (strain CNCM I-12250 / La1 / NCC 533).